The sequence spans 1058 residues: COP1-interacting protein 7 (1058 aa).

3 disordered regions span residues 123–147, 262–281, and 330–463; these read LGGT…GDTV, HGNS…QEGR, and MGDV…GNDN. 2 stretches are compositionally biased toward polar residues: residues 126-136 and 262-276; these read TWTSQKSTALS and HGNS…SFET. A Nuclear localization signal 1 motif is present at residues 340–347; sequence SKKKKKKK. A compositionally biased stretch (basic residues) spans 340-353; the sequence is SKKKKKKKKNKKKS. Acidic residues predominate over residues 403–414; sequence DSDESGEEEGFV. Residues 431–438 carry the Nuclear localization signal 2 motif; it reads ERRHKSTS. Positions 432–446 are enriched in basic residues; it reads RRHKSTSHRQRKHKS. The span at 447-462 shows a compositional bias: basic and acidic residues; that stretch reads HNGDDDSSNKETKGND. At Ser477 the chain carries Phosphoserine. Residues 708-887 form a disordered region; it reads AGEQTLDGKE…KSVELSRDPS (180 aa). The span at 757–773 shows a compositional bias: basic and acidic residues; sequence SKSEMEEERKKRMEELL. The short motif at 764 to 771 is the Nuclear localization signal 3 element; the sequence is ERKKRMEE. A compositionally biased stretch (low complexity) spans 783–808; it reads KSSGGSVSSSLASKKTPTVTKSVKSS. Composition is skewed to basic and acidic residues over residues 860 to 869 and 878 to 887; these read KTEKAQEKKS and KSVELSRDPS. Phosphoserine occurs at positions 915, 986, and 992. The interval 1020-1041 is disordered; the sequence is STPPATEADHSRKKWNSEETSP. Residues 1026–1040 are compositionally biased toward basic and acidic residues; it reads EADHSRKKWNSEETS.

As to quaternary structure, interacts with COP1.

It is found in the nucleus. In terms of biological role, exhibits transcriptional activation activity. Positive regulator of light-regulated genes, probably being a direct downstream target of COP1 for mediating light control of gene expression. In Arabidopsis thaliana (Mouse-ear cress), this protein is COP1-interacting protein 7.